Consider the following 893-residue polypeptide: Pentatricopeptide repeat-containing protein At5g52850, chloroplastic (893 aa).

PPR repeat units follow at residues 57–87, 88–122, 123–157, 158–188, 189–223, 224–257, 258–288, 289–323, 324–358, 359–390, 391–425, 426–460, 461–491, 492–526, 527–561, 562–592, 593–627, 628–658, and 664–694; these read NLDLCNNLLSLYLKTDGIWNARKLFDEMSHR, TVFAWTVMISAFTKSQEFASALSLFEEMMASGTHP, NEFTFSSVVRSCAGLRDISYGGRVHGSVIKTGFEG, NSVVGSSLSDLYSKCGQFKEACELFSSLQNA, DTISWTMMISSLVGARKWREALQFYSEMVKAGVPP, NEFTFVKLLGASSFLGLEFGKTIHSNIIVRGIPL, NVVLKTSLVDFYSQFSKMEDAVRVLNSSGEQ, DVFLWTSVVSGFVRNLRAKEAVGTFLEMRSLGLQP, NNFTYSAILSLCSAVRSLDFGKQIHSQTIKVGFED, STDVGNALVDMYMKCSASEVEASRVFGAMVSP, NVVSWTTLILGLVDHGFVQDCFGLLMEMVKREVEP, NVVTLSGVLRACSKLRHVRRVLEIHAYLLRRHVDG, EMVVGNSLVDAYASSRKVDYAWNVIRSMKRR, DNITYTSLVTRFNELGKHEMALSVINYMYGDGIRM, DQLSLPGFISASANLGALETGKHLHCYSVKSGFSG, AASVLNSLVDMYSKCGSLEDAKKVFEEIATP, DVVSWNGLVSGLASNGFISSALSAFEEMRMKETEP, DSVTFLILLSACSNGRLTDLGLEYFQVMKKI, and QVEHYVHLVGILGRAGRLEEATGVVETMHLK. Residues 699 to 774 form a type E motif region; that stretch reads IFKTLLRACR…KLGKSTVEVQ (76 aa). The interval 775 to 806 is type E(+) motif; that stretch reads GKVHSFVSEDVTRVDKTNGIYAEIESIKEEIK. Residues 807 to 893 are type DYW motif; it reads RFGSPYRGNE…SCKREETSFV (87 aa).

The protein belongs to the PPR family. PCMP-H subfamily.

It is found in the plastid. The protein resides in the chloroplast. This chain is Pentatricopeptide repeat-containing protein At5g52850, chloroplastic (PCMP-H31), found in Arabidopsis thaliana (Mouse-ear cress).